The following is a 231-amino-acid chain: Large ribosomal subunit protein uL1 (231 aa).

Belongs to the universal ribosomal protein uL1 family. Part of the 50S ribosomal subunit.

Binds directly to 23S rRNA. The L1 stalk is quite mobile in the ribosome, and is involved in E site tRNA release. In terms of biological role, protein L1 is also a translational repressor protein, it controls the translation of the L11 operon by binding to its mRNA. This is Large ribosomal subunit protein uL1 from Carboxydothermus hydrogenoformans (strain ATCC BAA-161 / DSM 6008 / Z-2901).